An 876-amino-acid polypeptide reads, in one-letter code: Alanine--tRNA ligase (876 aa).

Zn(2+) is bound by residues histidine 568, histidine 572, cysteine 670, and histidine 674.

The protein belongs to the class-II aminoacyl-tRNA synthetase family. It depends on Zn(2+) as a cofactor.

The protein localises to the cytoplasm. It carries out the reaction tRNA(Ala) + L-alanine + ATP = L-alanyl-tRNA(Ala) + AMP + diphosphate. Its function is as follows. Catalyzes the attachment of alanine to tRNA(Ala) in a two-step reaction: alanine is first activated by ATP to form Ala-AMP and then transferred to the acceptor end of tRNA(Ala). Also edits incorrectly charged Ser-tRNA(Ala) and Gly-tRNA(Ala) via its editing domain. This is Alanine--tRNA ligase from Geotalea uraniireducens (strain Rf4) (Geobacter uraniireducens).